A 118-amino-acid chain; its full sequence is ATP synthase subunit gamma, chloroplastic (118 aa).

Cysteine 30 and cysteine 36 form a disulfide bridge.

Belongs to the ATPase gamma chain family. In terms of assembly, F-type ATPases have 2 components, CF(1) - the catalytic core - and CF(0) - the membrane proton channel. CF(1) has five subunits: alpha(3), beta(3), gamma(1), delta(1), epsilon(1). CF(0) has four main subunits: a, b, b' and c.

The protein localises to the plastid. It localises to the chloroplast thylakoid membrane. In terms of biological role, produces ATP from ADP in the presence of a proton gradient across the membrane. The gamma chain is believed to be important in regulating ATPase activity and the flow of protons through the CF(0) complex. Inceptin is a proteolytic fragment produced by insect larvae that previously ingested the protein. This peptide mediate plant perception of herbivory through the induction of volatile, phenylpropanoid and protease inhibitor defenses such as ethylene, jasmonic acid and salicylic acid for example. This Vigna unguiculata (Cowpea) protein is ATP synthase subunit gamma, chloroplastic.